The sequence spans 239 residues: Ribonuclease PH (239 aa).

Residues R86 and 124–126 (GTR) each bind phosphate.

Belongs to the RNase PH family. In terms of assembly, homohexameric ring arranged as a trimer of dimers.

The catalysed reaction is tRNA(n+1) + phosphate = tRNA(n) + a ribonucleoside 5'-diphosphate. In terms of biological role, phosphorolytic 3'-5' exoribonuclease that plays an important role in tRNA 3'-end maturation. Removes nucleotide residues following the 3'-CCA terminus of tRNAs; can also add nucleotides to the ends of RNA molecules by using nucleoside diphosphates as substrates, but this may not be physiologically important. Probably plays a role in initiation of 16S rRNA degradation (leading to ribosome degradation) during starvation. The polypeptide is Ribonuclease PH (Rhizobium etli (strain ATCC 51251 / DSM 11541 / JCM 21823 / NBRC 15573 / CFN 42)).